Consider the following 162-residue polypeptide: Ribosome maturation factor RimP (162 aa).

It belongs to the RimP family.

It localises to the cytoplasm. Required for maturation of 30S ribosomal subunits. The sequence is that of Ribosome maturation factor RimP from Cupriavidus necator (strain ATCC 17699 / DSM 428 / KCTC 22496 / NCIMB 10442 / H16 / Stanier 337) (Ralstonia eutropha).